The chain runs to 345 residues: MSESEAEETKISTEPVDNAWSMKIPAFRQEDNPHGMVEESSFATLFPKYRERYLKEVWPLVEQCLAEHHLKAELDLMEGSMVVKTSRKTWDPYIIIKARDMIKLMARSVPFEQAKRVLQDDIGCDIIKIGNLVHKKEKFVKRRQRLIGPNGATLKSIELLTDCYVLVQGNTVSALGPYKGLQQVRDIVLETMNNVHPIYNIKALMIKRELMKDPRLANEDWSRFLPKFKNKNISKRKQPKVKKQKKEYTPFPPSQPESKVDKQLASGEYFLNQEQKQAKRNQERTEKQKEAAKRQDERRNKDFVPPTEESAASSRKKEDGSSSSKVDVKALKAKLIKANKKARSS.

Residues 125 to 193 (DIIKIGNLVH…VRDIVLETMN (69 aa)) form the KH domain. Positions 232-245 (NISKRKQPKVKKQK) are enriched in basic residues. Disordered stretches follow at residues 232-260 (NISK…ESKV) and 273-345 (QEQK…ARSS). Positions 270-298 (FLNQEQKQAKRNQERTEKQKEAAKRQDER) form a coiled coil. Composition is skewed to basic and acidic residues over residues 276–302 (KQAK…RNKD) and 315–330 (RKKE…DVKA). The segment covering 331–345 (LKAKLIKANKKARSS) has biased composition (basic residues).

The protein belongs to the KRR1 family. As to quaternary structure, monomer. Component of the ribosomal small subunit (SSU) processome.

It localises to the nucleus. The protein localises to the nucleolus. Functionally, required for 40S ribosome biogenesis. Involved in nucleolar processing of pre-18S ribosomal RNA and ribosome assembly. Binds to RNA. Required for female germline development, cell viability during eye development and for survival of dividing cells and epithelial cells during early wing disk development. This chain is KRR1 small subunit processome component homolog (dbe), found in Drosophila melanogaster (Fruit fly).